The sequence spans 111 residues: Probable 4-amino-4-deoxy-L-arabinose-phosphoundecaprenol flippase subunit ArnE (111 aa).

Helical transmembrane passes span 37 to 57 (LIWL…WLKL), 65 to 85 (QAYP…HFFF), and 91 to 111 (LQHW…GQGI).

It belongs to the ArnE family. Heterodimer of ArnE and ArnF.

It localises to the cell inner membrane. The protein operates within bacterial outer membrane biogenesis; lipopolysaccharide biosynthesis. Functionally, translocates 4-amino-4-deoxy-L-arabinose-phosphoundecaprenol (alpha-L-Ara4N-phosphoundecaprenol) from the cytoplasmic to the periplasmic side of the inner membrane. In Hamiltonella defensa subsp. Acyrthosiphon pisum (strain 5AT), this protein is Probable 4-amino-4-deoxy-L-arabinose-phosphoundecaprenol flippase subunit ArnE.